The chain runs to 216 residues: Probable inactive E3 ubiquitin-protein ligase SINAT6 (216 aa).

The SIAH-type zinc finger occupies 5 to 74 (INDLQVESRV…LLLHLRNDHN (70 aa)).

Belongs to the SINA (Seven in absentia) family. As to quaternary structure, homodimer. Interacts with SINAT1, SINAT2, SINAT3, SINAT4 and SINAT5. Interacts with ATG6 and TRAF1A. As to expression, expressed in roots, rosette leaves, cauline leaves, guard cells and flowers.

It is found in the cytoplasm. The protein localises to the nucleus. Functionally, probable inactive E3 ubiquitin-protein ligase that plays a role in regulation of autophagy. Upon starvation, involved in maintaining ATG6 homeostasis by competitively associating with ATG6, a component of the autophagosome complex. Acts as a positive regulator of drought stress response. Functions as a positive regulator of abscisic acid-mediated stomatal closure. This chain is Probable inactive E3 ubiquitin-protein ligase SINAT6, found in Arabidopsis thaliana (Mouse-ear cress).